A 218-amino-acid polypeptide reads, in one-letter code: UPF0319 protein PM0395 (218 aa).

The first 21 residues, methionine 1 to alanine 21, serve as a signal peptide directing secretion.

Belongs to the UPF0319 family.

The sequence is that of UPF0319 protein PM0395 from Pasteurella multocida (strain Pm70).